Reading from the N-terminus, the 187-residue chain is Ribosome maturation factor RimM (187 aa).

Positions 1-17 are enriched in polar residues; it reads MTSTPSPSTADPNSTND. Residues 1 to 21 are disordered; that stretch reads MTSTPSPSTADPNSTNDWLPV. Residues 111–184 enclose the PRC barrel domain; the sequence is EGEFHLLDLV…WLLLTPPPGL (74 aa).

The protein belongs to the RimM family. In terms of assembly, binds ribosomal protein uS19.

The protein localises to the cytoplasm. An accessory protein needed during the final step in the assembly of 30S ribosomal subunit, possibly for assembly of the head region. Essential for efficient processing of 16S rRNA. May be needed both before and after RbfA during the maturation of 16S rRNA. It has affinity for free ribosomal 30S subunits but not for 70S ribosomes. The sequence is that of Ribosome maturation factor RimM from Synechococcus sp. (strain CC9311).